The sequence spans 384 residues: Dual-specificity RNA methyltransferase RlmN (384 aa).

Glutamate 93 serves as the catalytic Proton acceptor. The Radical SAM core domain occupies 99–339 (EETRGTLCVS…TTIRKTRGDD (241 aa)). Cysteine 106 and cysteine 344 are joined by a disulfide. 3 residues coordinate [4Fe-4S] cluster: cysteine 113, cysteine 117, and cysteine 120. S-adenosyl-L-methionine-binding positions include 170–171 (GE), serine 202, 224–226 (SLH), and asparagine 301. The active-site S-methylcysteine intermediate is the cysteine 344.

The protein belongs to the radical SAM superfamily. RlmN family. [4Fe-4S] cluster serves as cofactor.

The protein resides in the cytoplasm. It carries out the reaction adenosine(2503) in 23S rRNA + 2 reduced [2Fe-2S]-[ferredoxin] + 2 S-adenosyl-L-methionine = 2-methyladenosine(2503) in 23S rRNA + 5'-deoxyadenosine + L-methionine + 2 oxidized [2Fe-2S]-[ferredoxin] + S-adenosyl-L-homocysteine. The catalysed reaction is adenosine(37) in tRNA + 2 reduced [2Fe-2S]-[ferredoxin] + 2 S-adenosyl-L-methionine = 2-methyladenosine(37) in tRNA + 5'-deoxyadenosine + L-methionine + 2 oxidized [2Fe-2S]-[ferredoxin] + S-adenosyl-L-homocysteine. In terms of biological role, specifically methylates position 2 of adenine 2503 in 23S rRNA and position 2 of adenine 37 in tRNAs. m2A2503 modification seems to play a crucial role in the proofreading step occurring at the peptidyl transferase center and thus would serve to optimize ribosomal fidelity. This chain is Dual-specificity RNA methyltransferase RlmN, found in Cupriavidus pinatubonensis (strain JMP 134 / LMG 1197) (Cupriavidus necator (strain JMP 134)).